The sequence spans 79 residues: Short neurotoxin 1/5 (79 aa).

The N-terminal stretch at 1-21 (MKTLLLTLVMVTIMCLDLGYT) is a signal peptide. Disulfide bonds link Cys-24/Cys-41, Cys-34/Cys-59, Cys-63/Cys-71, and Cys-72/Cys-77.

It belongs to the three-finger toxin family. Short-chain subfamily. Type III alpha-neurotoxin sub-subfamily. In terms of tissue distribution, expressed by the venom gland.

Its subcellular location is the secreted. Its function is as follows. Binds with high affinity to muscle nicotinic acetylcholine receptor (nAChR) and inhibit acetylcholine from binding to the receptor, thereby impairing neuromuscular transmission. Compete with the binding of alpha-bungarotoxin on muscle AChR (from Torpedo) with an IC(50) of 0.31 uM (SNTX1) and 3.1 uM (SNTX5). Is able of exerting muscle paralysis, spasms and increased respiration. This chain is Short neurotoxin 1/5, found in Pseudonaja textilis (Eastern brown snake).